We begin with the raw amino-acid sequence, 137 residues long: Large ribosomal subunit protein uL16 (137 aa).

Belongs to the universal ribosomal protein uL16 family. In terms of assembly, part of the 50S ribosomal subunit.

Its function is as follows. Binds 23S rRNA and is also seen to make contacts with the A and possibly P site tRNAs. This Lactococcus lactis subsp. lactis (strain IL1403) (Streptococcus lactis) protein is Large ribosomal subunit protein uL16.